Reading from the N-terminus, the 227-residue chain is PKHD-type hydroxylase azo0608 (227 aa).

A Fe2OG dioxygenase domain is found at 78-178; it reads RVLTPFFNRY…RVACFMFMQS (101 aa). The Fe cation site is built by H97, D99, and H159. Residue R169 coordinates 2-oxoglutarate.

Fe(2+) is required as a cofactor. L-ascorbate serves as cofactor.

In Azoarcus sp. (strain BH72), this protein is PKHD-type hydroxylase azo0608.